Here is a 681-residue protein sequence, read N- to C-terminus: Cryptochrome-1 (681 aa).

A CNT1, binds chromophores to sense blue light and mediate CRY dimerization region spans residues 1–489 (MSGSVSGCGS…AKARLHEALS (489 aa)). One can recognise a Photolyase/cryptochrome alpha/beta domain in the interval 12–141 (GCSIVWFRRD…AVRSFNADLL (130 aa)). Cys-80 and Cys-190 are disulfide-bonded. Tyr-235 serves as a coordination point for FAD. Asn-238 serves as a coordination point for Mg(2+). Position 239 (Arg-239) interacts with ATP. 3 residues coordinate Mg(2+): Lys-241, Ser-244, and Thr-246. FAD is bound by residues 247–251 (TSFLS) and Ser-293. His-358 is a binding site for Mg(2+). FAD-binding positions include Asp-359 and 390–392 (DAD). 359–360 (DR) serves as a coordination point for ATP. Asp-409 contacts ATP. The interval 490 to 681 (QMWQLEAASR…LNWRRLSQTG (192 aa)) is CCT1/CCE1, mediates blue light signaling. Disordered stretches follow at residues 525–598 (RDIT…EPAS) and 616–664 (STED…TSSY). Positions 583 to 598 (MVNTNQAQQRRAEPAS) are enriched in polar residues. The residue at position 616 (Ser-616) is a Phosphoserine. The residue at position 621 (Thr-621) is a Phosphothreonine.

It belongs to the DNA photolyase class-1 family. As to quaternary structure, homodimer. Interacts with ADO1, COP1 and PHYA. Interacts specifically with the dark/far-red (Pr) state of PHYB, but not with the red light-activated (Pfr). Interacts with PIF4 and PIF5 in the nucleus in response to low blue light (LBL). Binds to SPA1 and SPA4 in response to blue light, this interaction prevents SPA1/COP1 complex formation and thus avoid COP1-dependent degradation of the transcription factor HY5 by the proteasome and promotes hypocotyl elongation. Interacts with TCP2. Binding to ATP mediates conformational changes which facilitate flavin binding. The cofactor is FAD. It depends on (6R)-5,10-methylene-5,6,7,8-tetrahydrofolate as a cofactor. Autophosphorylated; in response to blue light and when in complex with FAD cofactor. Kinase activity is optimal in the presence of magnesium ions, about 30 percent of the optimal activity in the presence of manganese ions, but inactive with calcium ions. Adopts an open conformation when phosphorylated upon photoexcitation and thus interacts with signaling partner proteins. In terms of tissue distribution, widely expressed. Expressed in the aerial tissues (e.g. cotyledons and leaf primordia), but not detected in the roots.

Its subcellular location is the cytoplasm. It is found in the nucleus. The protein resides in the PML body. Its activity is regulated as follows. Light exposure induces a conformational change in the C-terminal domain CCT1 required for activity. Photoreceptor that mediates primarily blue light inhibition of hypocotyl elongation and photoperiodic control of floral initiation, and regulates other light responses, including circadian rhythms, tropic growth, stomata opening, guard cell development, root development, bacterial and viral pathogen responses, abiotic stress responses, cell cycles, programmed cell death, apical dominance, fruit and ovule development, seed dormancy, and magnetoreception. Photoexcited cryptochromes interact with signaling partner proteins to alter gene expression at both transcriptional and post-translational levels and, consequently, regulate the corresponding metabolic and developmental programs. Blue-light absorbing flavoprotein that activates reversible flavin photoreduction via an electron transport chain comprising a tryptophan triad (W-324, W-377 and W-400), accompanied by a large conformational change upon photoexcitation, or via an alternative electron transport that involves small metabolites, including NADPH, NADH, and ATP. The half-life of the activated signaling state is about 5 minutes. Also involved in the detection of blue/green ratio in light (shade under leaf canopies) and subsequent adaptations on plant growth and development. In darkness, the dark reoxidation of flavin occurs and leads to inactivated state. Perceives low blue light (LBL) and responds by directly contacting two bHLH transcription factors, PIF4 and PIF5, at chromatin on E-box variant 5'-CA[CT]GTG-3' to promote their activity and stimulate specific gene expression to adapt global physiology (e.g. hypocotyl elongation and hyponastic growth in low blue light). When activated by high-intensity blue light, catalyzes direct enzymatic conversion of molecular oxygen O(2) to reactive oxygen species (ROS) and hydrogen peroxide H(2)O(2) in vitro. ROS accumulation upon activation by blue light leads to cell death in protoplasts. Seems essential for blue-light-triggered and singlet oxygen-mediated programmed cell death (PCD). Required for the induction of nuclear genes encoding photoprotective components by GATA24 and GATA28 in extreme light intensities that exceed the electron utilization capacity of the chloroplast. Involved in shortening the circadian clock period, especially at 27 degrees Celsius, in blue light (BL) and required to maintain clock genes expression rhythm. Mediates blue light-induced gene expression and hypocotyl elongation through the inhibition of COP1-mediated degradation of the transcription factors BIT1 and HY5 and via the activation of anion channels at the plasma membrane, probably via auxin signaling. Required for the hypocotyl hook formation in darkness. Involved in blue light-dependent stomatal opening, CHS gene expression, transpiration, inhibition of stem growth and increase of root growth, probably by regulating abscisic acid (ABA). Prevents lateral roots growth by inhibiting auxin transport. Necessary for shade avoidance syndrome (SAS), characterized by leaf hyponasty and reduced lamina/petiole ratio, when exposed to blue light attenuation. Together with phototropins, involved in phototropism regulation by various blue light fluence; blue light attenuates phototropism in high fluence rates (100 umol.m-2.s-1) but enhances phototropism in low fluence rates (&lt;1.0 umol.m-2.s-1). Required for blue/UV-A wavelengths-mediated inhibition of explants shoot regeneration in vitro (e.g. new shoot apical meristems regeneration from excised cotyledons). Modulates anthocyanin accumulation in a PHYA-dependent manner in far-red-light. Acts as a PHYA/PHYB-dependent modulator of chlorophyll accumulation in red light. Contributes to most blue light deetiolation responses. May act as a chemical magnetoreceptor, via magnetically sensitive kinetics and quantum yields of photo-induced flavin / tryptophan radical pairs. The effect of near-null magnetic field on flowering is altered by changes of blue light cycle and intensity in a CRY1/CRY2-dependent manner. Involved in the strigolactone signaling that regulates hypocotyl growth in response to blue light. Modulates temperature-dependent growth and physiology maintenance, especially at warm ambient temperatures (e.g. 27 degrees Celsius) and in white light and low-light conditions, via HFR1-dependent activity; this process requires PTAC12/HMR/PAP5 (transcriptional transactivator). In terms of biological role, implicated in promoting R protein-mediated resistance to Pseudomonas syringae pv. tomato (Pst.) DC3000 under continuous light conditions. Promotes systemic acquired resistance (SAR) and PR gene expression triggered by P.syringae. This chain is Cryptochrome-1, found in Arabidopsis thaliana (Mouse-ear cress).